The sequence spans 201 residues: Recombination protein RecR (201 aa).

The C4-type zinc finger occupies 60–75 (CKRCGSYAETEICEIC). The Toprim domain maps to 83-178 (HTFCVVEQPE…NVTRIAYGIT (96 aa)).

This sequence belongs to the RecR family.

Functionally, may play a role in DNA repair. It seems to be involved in an RecBC-independent recombinational process of DNA repair. It may act with RecF and RecO. This is Recombination protein RecR from Leptospira interrogans serogroup Icterohaemorrhagiae serovar copenhageni (strain Fiocruz L1-130).